The primary structure comprises 803 residues: Phenylalanine--tRNA ligase beta subunit (803 aa).

The tRNA-binding domain occupies 39–151 (SMKFSGIKIG…KNAIIGEDIK (113 aa)). The region spanning 406 to 482 (PKKILIKLYK…RFYGFEKIPI (77 aa)) is the B5 domain. Mg(2+) is bound by residues Asp-466 and Asp-470. In terms of domain architecture, FDX-ACB spans 707-800 (SDIPFNYRDI…LKKNFLIEIR (94 aa)).

This sequence belongs to the phenylalanyl-tRNA synthetase beta subunit family. Type 1 subfamily. In terms of assembly, tetramer of two alpha and two beta subunits. Mg(2+) is required as a cofactor.

It localises to the cytoplasm. It catalyses the reaction tRNA(Phe) + L-phenylalanine + ATP = L-phenylalanyl-tRNA(Phe) + AMP + diphosphate + H(+). This is Phenylalanine--tRNA ligase beta subunit from Wigglesworthia glossinidia brevipalpis.